Consider the following 566-residue polypeptide: Putative ABC transporter ATP-binding protein lp_0149 (566 aa).

2 consecutive ABC transporter domains span residues 6–247 and 302–536; these read ISFK…GLRE and LAIE…ASLA. Residues 40 to 47 and 335 to 342 each bind ATP; these read GPSGSGKS and GQNGTGKS.

The protein belongs to the ABC transporter superfamily.

The protein resides in the cell membrane. In terms of biological role, probably part of an ABC transporter complex. Responsible for energy coupling to the transport system. The protein is Putative ABC transporter ATP-binding protein lp_0149 of Lactiplantibacillus plantarum (strain ATCC BAA-793 / NCIMB 8826 / WCFS1) (Lactobacillus plantarum).